The primary structure comprises 450 residues: UDP-N-acetylmuramoylalanine--D-glutamate ligase (450 aa).

119–125 (GSNGKTT) contacts ATP.

The protein belongs to the MurCDEF family.

The protein localises to the cytoplasm. The catalysed reaction is UDP-N-acetyl-alpha-D-muramoyl-L-alanine + D-glutamate + ATP = UDP-N-acetyl-alpha-D-muramoyl-L-alanyl-D-glutamate + ADP + phosphate + H(+). It participates in cell wall biogenesis; peptidoglycan biosynthesis. Functionally, cell wall formation. Catalyzes the addition of glutamate to the nucleotide precursor UDP-N-acetylmuramoyl-L-alanine (UMA). The protein is UDP-N-acetylmuramoylalanine--D-glutamate ligase of Streptococcus pneumoniae (strain ATCC 700669 / Spain 23F-1).